Reading from the N-terminus, the 417-residue chain is 3-isopropylmalate dehydratase large subunit (417 aa).

Positions 298, 358, and 361 each coordinate [4Fe-4S] cluster.

Belongs to the aconitase/IPM isomerase family. LeuC type 2 subfamily. As to quaternary structure, heterodimer of LeuC and LeuD. It depends on [4Fe-4S] cluster as a cofactor.

It catalyses the reaction (2R,3S)-3-isopropylmalate = (2S)-2-isopropylmalate. Its pathway is amino-acid biosynthesis; L-leucine biosynthesis; L-leucine from 3-methyl-2-oxobutanoate: step 2/4. Its function is as follows. Catalyzes the isomerization between 2-isopropylmalate and 3-isopropylmalate, via the formation of 2-isopropylmaleate. This is 3-isopropylmalate dehydratase large subunit from Thermoanaerobacter pseudethanolicus (strain ATCC 33223 / 39E) (Clostridium thermohydrosulfuricum).